Reading from the N-terminus, the 259-residue chain is Deoxyribose-phosphate aldolase (259 aa).

Catalysis depends on Asp102, which acts as the Proton donor/acceptor. The active-site Schiff-base intermediate with acetaldehyde is the Lys167. The active-site Proton donor/acceptor is Lys201.

It belongs to the DeoC/FbaB aldolase family. DeoC type 2 subfamily.

Its subcellular location is the cytoplasm. The enzyme catalyses 2-deoxy-D-ribose 5-phosphate = D-glyceraldehyde 3-phosphate + acetaldehyde. It participates in carbohydrate degradation; 2-deoxy-D-ribose 1-phosphate degradation; D-glyceraldehyde 3-phosphate and acetaldehyde from 2-deoxy-alpha-D-ribose 1-phosphate: step 2/2. In terms of biological role, catalyzes a reversible aldol reaction between acetaldehyde and D-glyceraldehyde 3-phosphate to generate 2-deoxy-D-ribose 5-phosphate. The sequence is that of Deoxyribose-phosphate aldolase from Escherichia coli (strain SMS-3-5 / SECEC).